Reading from the N-terminus, the 180-residue chain is Inner membrane-spanning protein YciB (180 aa).

Transmembrane regions (helical) follow at residues 4–24 (LLSEIGPVIAFFAGFFYGGGI), 25–45 (QHATLYMLITSVICITLCYVI), 49–69 (VSKLSIISTTVLLVSGSITLI), 76–96 (IKIKPTILYVIFGIIFLMSGI), 118–138 (ITLSYRTAAFFFFMAVVNEVV), and 150–170 (FKVFGVIPITFIFILLQLPLL).

Belongs to the YciB family.

The protein localises to the cell inner membrane. Its function is as follows. Plays a role in cell envelope biogenesis, maintenance of cell envelope integrity and membrane homeostasis. The polypeptide is Inner membrane-spanning protein YciB (Rickettsia africae (strain ESF-5)).